The primary structure comprises 138 residues: Protein PsiE homolog (138 aa).

A run of 4 helical transmembrane segments spans residues 12-34 (YLLQALLNVCLFFLALALSALLI), 56-76 (YEMLGELLIFFMYFEFIALII), 84-104 (HFPLRYFIYIGITAVIRLIII), and 109-129 (AISTFWWAMAILAMICGFFIA).

The protein belongs to the PsiE family.

It is found in the cell membrane. The sequence is that of Protein PsiE homolog from Bacillus subtilis (strain 168).